Reading from the N-terminus, the 161-residue chain is Phage-like element PBSX protein XkdI (161 aa).

The protein to B.subtilis YqbI.

The sequence is that of Phage-like element PBSX protein XkdI (xkdI) from Bacillus subtilis (strain 168).